We begin with the raw amino-acid sequence, 254 residues long: Thiamine thiazole synthase (254 aa).

NAD(+) contacts are provided by residues S36, 55 to 56 (EK), G63, V127, and 154 to 156 (HVD). Positions 156 and 171 each coordinate Fe cation. M219 lines the NAD(+) pocket. A glycine-binding site is contributed by R229.

The protein belongs to the THI4 family. As to quaternary structure, homooctamer; tetramer of dimers. Fe(2+) serves as cofactor.

The catalysed reaction is hydrogen sulfide + glycine + NAD(+) = ADP-5-ethyl-4-methylthiazole-2-carboxylate + nicotinamide + 3 H2O + H(+). Its pathway is cofactor biosynthesis; thiamine diphosphate biosynthesis. In terms of biological role, involved in the biosynthesis of the thiazole moiety of thiamine. Catalyzes the conversion of NAD and glycine to adenosine diphosphate 5-(2-hydroxyethyl)-4-methylthiazole-2-carboxylate (ADT), an adenylated thiazole intermediate, using free sulfide as a source of sulfur. The chain is Thiamine thiazole synthase from Methanoculleus marisnigri (strain ATCC 35101 / DSM 1498 / JR1).